A 462-amino-acid chain; its full sequence is MAVSLWQQCIGRLQDELSAQQFSMWIRPLQAEMDGDTLVLYAPNRFVLDWVRDKYINIINQFFTEQMGSDAPKLRFDIGSRPSAPKPIQATAAVVKPKLESSPQKSQTSFNVNAPEPAATANHRSNINPTYQFENFVEGKSNQLGKAAALQVAENPGGAYNPLFLYGGTGLGKTHLLHAVGNGIIKNKPNAKVVYMHSERFVQDMVKALQNNAIEEFKRYYRSVDALFIDDIQFFANKDRSQEEFFHTFNALLEGNHQIILTSDRYPKEIDGVEDRLKSRFGWGLTVAIEPPELETRVAILMRKAQESGINLPDEVAFFIAKRLRSNVRELEGALNRVIANANFTGRPITIDFVREALRDLLALQEKLVTIDNIQKTVAEYYKIKMADMLSKRRSRSVARPRQVAMALSKELTNHSLPEIGDAFGGRDHTTVLHACRKIAQLREESHDTKEDYANLIRTLSS.

The tract at residues 1–84 is domain I, interacts with DnaA modulators; it reads MAVSLWQQCI…RFDIGSRPSA (84 aa). A domain II region spans residues 84–125; it reads APKPIQATAAVVKPKLESSPQKSQTSFNVNAPEPAATANHRS. The segment at 126–342 is domain III, AAA+ region; that stretch reads NINPTYQFEN…GALNRVIANA (217 aa). Positions 170, 172, 173, and 174 each coordinate ATP. The tract at residues 343–462 is domain IV, binds dsDNA; sequence NFTGRPITID…YANLIRTLSS (120 aa).

It belongs to the DnaA family. As to quaternary structure, oligomerizes as a right-handed, spiral filament on DNA at oriC.

It localises to the cytoplasm. Functionally, plays an essential role in the initiation and regulation of chromosomal replication. ATP-DnaA binds to the origin of replication (oriC) to initiate formation of the DNA replication initiation complex once per cell cycle. Binds the DnaA box (a 9 base pair repeat at the origin) and separates the double-stranded (ds)DNA. Forms a right-handed helical filament on oriC DNA; dsDNA binds to the exterior of the filament while single-stranded (ss)DNA is stabiized in the filament's interior. The ATP-DnaA-oriC complex binds and stabilizes one strand of the AT-rich DNA unwinding element (DUE), permitting loading of DNA polymerase. After initiation quickly degrades to an ADP-DnaA complex that is not apt for DNA replication. Binds acidic phospholipids. The chain is Chromosomal replication initiator protein DnaA from Shewanella woodyi (strain ATCC 51908 / MS32).